The sequence spans 382 residues: Beta-1,4-galactosyltransferase 6 (382 aa).

The Cytoplasmic segment spans residues 1 to 14 (MSVLRRMMRVSNRS). The helical; Signal-anchor for type II membrane protein transmembrane segment at 15 to 35 (LLAFIFFFSLSSSCLYFIYVA) threads the bilayer. The Lumenal portion of the chain corresponds to 36-382 (PGIANTYLFM…MPELAPIEDY (347 aa)). Residues Asn71, Asn75, Asn83, Asn84, Asn99, and Asn122 are each glycosylated (N-linked (GlcNAc...) asparagine). A disulfide bridge connects residues Cys108 and Cys152. UDP-alpha-D-galactose-binding positions include 163–167 (PFRNR), 202–204 (FNR), 229–230 (VD), Tyr258, and Trp290. Cysteines 223 and 242 form a disulfide. Asp230 serves as a coordination point for Mn(2+). Residue 292–295 (GEDD) coordinates N-acetyl-D-glucosamine. Asn307 is a glycosylation site (N-linked (GlcNAc...) asparagine). His323 contacts Mn(2+). UDP-alpha-D-galactose is bound at residue 323–324 (HH). Residue Arg334 coordinates N-acetyl-D-glucosamine. The N-linked (GlcNAc...) asparagine glycan is linked to Asn367.

This sequence belongs to the glycosyltransferase 7 family. Mn(2+) serves as cofactor. It depends on Mg(2+) as a cofactor. As to expression, high expression in brain and adrenal gland, lower in liver, lung, colon and peripheral white blood cells.

The protein resides in the golgi apparatus. It is found in the golgi stack membrane. The catalysed reaction is a beta-D-glucosyl-(1&lt;-&gt;1')-N-acylsphing-4-enine + UDP-alpha-D-galactose = a beta-D-Gal-(1-&gt;4)-beta-D-Glc-(1&lt;-&gt;1)-Cer(d18:1(4E)) + UDP + H(+). Its pathway is protein modification; protein glycosylation. It functions in the pathway sphingolipid metabolism. Its activity is regulated as follows. Inhibited by EDTA. Functionally, catalyzes the synthesis of lactosylceramide (LacCer) via the transfer of galactose from UDP-galactose to glucosylceramide (GlcCer). LacCer is the starting point in the biosynthesis of all gangliosides (membrane-bound glycosphingolipids) which play pivotal roles in the CNS including neuronal maturation and axonal and myelin formation. The sequence is that of Beta-1,4-galactosyltransferase 6 from Homo sapiens (Human).